A 614-amino-acid chain; its full sequence is Serine/threonine-protein kinase Pkn1 (614 aa).

The Protein kinase domain maps to 13–276 (YKVIAELGHG…TSGEQLQVTL (264 aa)). Residues 19–27 (LGHGLWSRD) and Lys42 each bind ATP.

The protein belongs to the protein kinase superfamily. Ser/Thr protein kinase family. As to quaternary structure, interacts with PknD, interacts with and phosphorylates IncG. Autophosphorylates on serine and threonine residues. Present in elementary bodies 40 hours post-infection as 2 proteins of approximately 70 and 65 kDa; the smaller one may be due to differential phosphorylation or degradation.

It catalyses the reaction L-seryl-[protein] + ATP = O-phospho-L-seryl-[protein] + ADP + H(+). The enzyme catalyses L-threonyl-[protein] + ATP = O-phospho-L-threonyl-[protein] + ADP + H(+). Together with the serine/threonine kinase PknD, may play a role in specific interactions with host proteins during host intracellular growth. Autophosphorylates and phosphorylates IncG, an inclusion-membrane protein required for the modification of the nascent chlamydial inclusion. The protein is Serine/threonine-protein kinase Pkn1 (pkn1) of Chlamydia trachomatis serovar L2 (strain ATCC VR-902B / DSM 19102 / 434/Bu).